The primary structure comprises 212 residues: ER lumen protein-retaining receptor 1 (212 aa).

The Lumenal segment spans residues 1-4 (MNLF). A helical membrane pass occupies residues 5–24 (RFLGDLSHLLAIILLLLKIW). Topologically, residues 25-32 (KSRSCAGI) are cytoplasmic. Residues 33–52 (SGKSQVLFAVVFTARYLDLF) traverse the membrane as a helical segment. An interaction with the K-D-E-L motif on target proteins region spans residues 47-48 (RY). Residues 53–58 (TNYISL) lie on the Lumenal side of the membrane. Residues 59–79 (YNTCMKVVYIACSFTTVWMIY) form a helical membrane-spanning segment. Topologically, residues 80 to 92 (SKFKATYDGNHDT) are cytoplasmic. A helical transmembrane segment spans residues 93-110 (FRVEFLVIPTAILAFLVN). Topologically, residues 111 to 116 (HDFTPL) are lumenal. A helical membrane pass occupies residues 117-135 (EILWTFSIYLESVAILPQL). The Cytoplasmic segment spans residues 136–149 (FMVSKTGEAETITS). The chain crosses the membrane as a helical span at residues 150-168 (HYLFALGVYRTLYLFNWIW). The tract at residues 159-169 (RTLYLFNWIWR) is interaction with the K-D-E-L motif on target proteins. Over 169 to 178 (RYHFEGFFDL) the chain is Lumenal. A helical transmembrane segment spans residues 179-199 (IAIVAGLVQTVLYCDFFYLYI). Topologically, residues 200 to 212 (TKVLKGKKLSLPA) are cytoplasmic. Residues 204–207 (KGKK) form an important for recycling of cargo proteins with the sequence motif K-D-E-L from the Golgi to the endoplasmic reticulum region. At Ser-209 the chain carries Phosphoserine; by PKA.

The protein belongs to the ERD2 family. Upon ligand binding the receptor oligomerizes and interacts with components of the transport machinery such as ARFGAP1 and ARF1. In terms of processing, phosphorylation by PKA at Ser-209 is required for endoplasmic reticulum retention function.

The protein resides in the golgi apparatus membrane. The protein localises to the cytoplasmic vesicle. It localises to the COPI-coated vesicle membrane. Its subcellular location is the endoplasmic reticulum membrane. It is found in the endoplasmic reticulum-Golgi intermediate compartment membrane. Receptor for the C-terminal sequence motif K-D-E-L that is present on endoplasmic reticulum resident proteins and that mediates their recycling from the Golgi back to the endoplasmic reticulum. The polypeptide is ER lumen protein-retaining receptor 1 (KDELR1) (Bos taurus (Bovine)).